A 737-amino-acid chain; its full sequence is Lysyl oxidase homolog 2A (737 aa).

A signal peptide spans 1 to 18; it reads MAVSSALCIFSLLVLAQA. SRCR domains follow at residues 29–130, 159–270, 294–393, and 403–512; these read LRLA…VICN, IRPI…VSCV, VRLR…VRCN, and IRLS…VSCS. Disulfide bonds link Cys55–Cys119, Cys68–Cys129, Cys99–Cys109, Cys188–Cys259, Cys201–Cys269, Cys235–Cys245, Cys319–Cys382, Cys332–Cys392, and Cys363–Cys373. Residue Asn256 is glycosylated (N-linked (GlcNAc...) asparagine). A glycan (N-linked (GlcNAc...) asparagine) is linked at Asn423. 3 disulfide bridges follow: Cys432/Cys498, Cys445/Cys511, and Cys479/Cys489. The lysyl-oxidase like stretch occupies residues 516 to 718; it reads PDLVLNAQLV…WTYSCHIGGS (203 aa). Asp517 and Leu518 together coordinate Ca(2+). 4 cysteine pairs are disulfide-bonded: Cys541–Cys592, Cys547–Cys662, Cys624–Cys640, and Cys630–Cys652. 3 residues coordinate Cu cation: His593, His595, and His597. Asn611 carries N-linked (GlcNAc...) asparagine glycosylation. The segment at residues 620 to 656 is a cross-link (lysine tyrosylquinone (Lys-Tyr)); sequence KASFCLEDTHCDEGISKRYHCANFGEQGITVGCWDTY. A 2',4',5'-topaquinone modification is found at Tyr656. Ca(2+) is bound by residues Glu689, Asp691, Asn694, and Asn695. Residues Cys699 and Cys713 are joined by a disulfide bond.

Belongs to the lysyl oxidase family. The cofactor is Cu cation. It depends on lysine tyrosylquinone residue as a cofactor. Post-translationally, the lysine tyrosylquinone cross-link (LTQ) is generated by condensation of the epsilon-amino group of a lysine with a topaquinone produced by oxidation of tyrosine.

It is found in the secreted. The protein resides in the extracellular space. Its subcellular location is the extracellular matrix. It localises to the basement membrane. The protein localises to the nucleus. It is found in the chromosome. The protein resides in the endoplasmic reticulum. It catalyses the reaction L-lysyl-[protein] + O2 + H2O = (S)-2-amino-6-oxohexanoyl-[protein] + H2O2 + NH4(+). In terms of biological role, mediates the post-translational oxidative deamination of lysine residues on target proteins leading to the formation of deaminated lysine (allysine). Acts as a transcription corepressor and specifically mediates deamination of trimethylated 'Lys-4' of histone H3 (H3K4me3), a specific tag for epigenetic transcriptional activation. Shows no activity against histone H3 when it is trimethylated on 'Lys-9' (H3K9me3) or 'Lys-27' (H3K27me3) or when 'Lys-4' is monomethylated (H3K4me1) or dimethylated (H3K4me2). Also mediates deamination of methylated TAF10, a member of the transcription factor IID (TFIID) complex, which induces release of TAF10 from promoters, leading to inhibition of TFIID-dependent transcription. LOXL2-mediated deamination of TAF10 results in transcriptional repression of genes required for embryonic stem cell pluripotency. Involved in epithelial to mesenchymal transition (EMT) and participates in repression of E-cadherin, probably by mediating deamination of histone H3. When secreted into the extracellular matrix, promotes cross-linking of extracellular matrix proteins by mediating oxidative deamination of peptidyl lysine residues in precursors to fibrous collagen and elastin. Acts as a regulator of sprouting angiogenesis, probably via collagen IV scaffolding. Acts as a regulator of chondrocyte differentiation, probably by regulating expression of factors that control chondrocyte differentiation. Required with loxl2b for correct expression of Sox2 and for neural differentiation. In Danio rerio (Zebrafish), this protein is Lysyl oxidase homolog 2A (loxl2a).